Here is a 216-residue protein sequence, read N- to C-terminus: Pyridoxine/pyridoxamine 5'-phosphate oxidase (216 aa).

Substrate-binding positions include 9–12 and R67; that span reads RLSY. Residues 62-67, 77-78, K84, and Q106 contribute to the FMN site; these read RIVLLR and YT. Y124, R128, and S132 together coordinate substrate. Residues 142–143 and W188 contribute to the FMN site; that span reads QS. Substrate is bound at residue 194–196; it reads RMH. R198 serves as a coordination point for FMN.

This sequence belongs to the pyridoxamine 5'-phosphate oxidase family. In terms of assembly, homodimer. FMN is required as a cofactor.

The catalysed reaction is pyridoxamine 5'-phosphate + O2 + H2O = pyridoxal 5'-phosphate + H2O2 + NH4(+). It catalyses the reaction pyridoxine 5'-phosphate + O2 = pyridoxal 5'-phosphate + H2O2. The protein operates within cofactor metabolism; pyridoxal 5'-phosphate salvage; pyridoxal 5'-phosphate from pyridoxamine 5'-phosphate: step 1/1. It participates in cofactor metabolism; pyridoxal 5'-phosphate salvage; pyridoxal 5'-phosphate from pyridoxine 5'-phosphate: step 1/1. Catalyzes the oxidation of either pyridoxine 5'-phosphate (PNP) or pyridoxamine 5'-phosphate (PMP) into pyridoxal 5'-phosphate (PLP). The polypeptide is Pyridoxine/pyridoxamine 5'-phosphate oxidase (Psychrobacter arcticus (strain DSM 17307 / VKM B-2377 / 273-4)).